The chain runs to 3914 residues: Trichosetin synthetase PKS-NRPS1 (3914 aa).

In terms of domain architecture, Ketosynthase family 3 (KS3) spans Asn4–Ala420. Catalysis depends on for beta-ketoacyl synthase activity residues Cys177, His301, and His340. The interval Val525–Ala847 is malonyl-CoA:ACP transacylase (MAT) domain. Residues His913–Pro1047 form an N-terminal hotdog fold region. Positions His913–Thr1214 are dehydratase (DH) domain. Residues His913–Glu1216 form the PKS/mFAS DH domain. Residue His946 is the Proton acceptor; for dehydratase activity of the active site. Positions Leu1062 to Glu1216 are C-terminal hotdog fold. Catalysis depends on Asp1122, which acts as the Proton donor; for dehydratase activity. The methyltransferase (MT) domain stretch occupies residues Glu1364–Leu1593. Residues Thr2083–Ser2255 form a ketoreductase (KR) domain region. One can recognise a Carrier 1 domain in the interval Leu2356–Ile2436. Residue Ser2396 is modified to O-(pantetheine 4'-phosphoryl)serine. A disordered region spans residues Glu2447 to Lys2518. The span at Gln2481–Glu2500 shows a compositional bias: polar residues. The tract at residues Ser2529 to Thr2956 is condensation (C) domain. Residues Gln2991 to Asp3388 are adenylation (A) (KR) domain. The Carrier 2 domain maps to Gly3502 to Gly3579. The residue at position 3539 (Ser3539) is an O-(pantetheine 4'-phosphoryl)serine. The tract at residues Leu3615 to Ala3831 is reductase (RED) domain.

The protein in the C-terminal section; belongs to the NRP synthetase family.

It catalyses the reaction L-serine + 7 malonyl-CoA + acetyl-CoA + 2 S-adenosyl-L-methionine + ATP + 8 NADPH + 11 H(+) = (5S)-3-[(2E,6R,8E,10E,12E)-2,6-dimethyltetradeca-2,8,10,12-tetraenoyl]-5-(hydroxymethyl)pyrrolidine-2,4-dione + AMP + 2 S-adenosyl-L-homocysteine + 7 CO2 + diphosphate + 8 NADP(+) + 8 CoA + 6 H2O. Its pathway is mycotoxin biosynthesis. Its function is as follows. Hybrid PKS-NRPS synthetase; part of the gene cluster that mediates the biosynthesis of trichosetin, a trans-fused decalin-containing tetramic acid with antimicrobial activity. The PKS module of PKS-NRPS1 together with the enoylreductase (ER) catalyze the formation of the polyketide unit which is then conjugated to L-serine by the condensation domain of the PKS-NRPS1 NRPS module. Activity of the Dieckmann cyclase domain (RED) results in release of the Dieckmann product intermediate. Diels-Alderase (DA) is involved in endo-selective Diels-Alder cycloaddition to form the decalin ring, leading to the production of N-desmethylequisetin also called trichosetin. The cluster does not contain the equisetin N-methyltransferase and consequently, trichosetin is isolated as final product. In Gibberella fujikuroi (strain CBS 195.34 / IMI 58289 / NRRL A-6831) (Bakanae and foot rot disease fungus), this protein is Trichosetin synthetase PKS-NRPS1.